A 206-amino-acid polypeptide reads, in one-letter code: Large ribosomal subunit protein bL25 (206 aa).

The interval 1 to 91 is bL25 domain; the sequence is MEYRLKAYYR…RPEHVDFFVL (91 aa). The tract at residues 92 to 206 is CTC domain; it reads SDEPVEMYVP…IKKGKEEEEE (115 aa). Residues 184-206 are disordered; that stretch reads AEEAAAEVAEPEVIKKGKEEEEE. A compositionally biased stretch (basic and acidic residues) spans 195–206; that stretch reads EVIKKGKEEEEE.

It belongs to the bacterial ribosomal protein bL25 family. CTC subfamily. As to quaternary structure, part of the 50S ribosomal subunit. Contacts the 5S rRNA.

Functionally, this is one of 3 proteins that mediate the attachment of the 5S rRNA onto the large ribosomal subunit. This Thermus thermophilus protein is Large ribosomal subunit protein bL25 (rplY).